Consider the following 280-residue polypeptide: Urease accessory protein UreD (280 aa).

This sequence belongs to the UreD family. UreD, UreF and UreG form a complex that acts as a GTP-hydrolysis-dependent molecular chaperone, activating the urease apoprotein by helping to assemble the nickel containing metallocenter of UreC. The UreE protein probably delivers the nickel.

Its subcellular location is the cytoplasm. Its function is as follows. Required for maturation of urease via the functional incorporation of the urease nickel metallocenter. The protein is Urease accessory protein UreD of Staphylococcus saprophyticus subsp. saprophyticus (strain ATCC 15305 / DSM 20229 / NCIMB 8711 / NCTC 7292 / S-41).